Consider the following 154-residue polypeptide: Endoribonuclease YbeY (154 aa).

Zn(2+) is bound by residues His-113, His-117, and His-123.

Belongs to the endoribonuclease YbeY family. It depends on Zn(2+) as a cofactor.

It is found in the cytoplasm. In terms of biological role, single strand-specific metallo-endoribonuclease involved in late-stage 70S ribosome quality control and in maturation of the 3' terminus of the 16S rRNA. The chain is Endoribonuclease YbeY from Aeromonas hydrophila subsp. hydrophila (strain ATCC 7966 / DSM 30187 / BCRC 13018 / CCUG 14551 / JCM 1027 / KCTC 2358 / NCIMB 9240 / NCTC 8049).